Consider the following 344-residue polypeptide: Dihydroorotate dehydrogenase (quinone) (344 aa).

FMN is bound by residues 65 to 69 (AGLDK) and Thr89. Position 69 (Lys69) interacts with substrate. 114–118 (NRMGF) provides a ligand contact to substrate. FMN-binding residues include Asn145 and Asn178. Substrate is bound at residue Asn178. Residue Ser181 is the Nucleophile of the active site. A substrate-binding site is contributed by Asn183. Residues Lys223 and Thr251 each coordinate FMN. Residue 252–253 (NT) participates in substrate binding. Residues Gly274, Gly303, and 324 to 325 (YS) each bind FMN.

It belongs to the dihydroorotate dehydrogenase family. Type 2 subfamily. In terms of assembly, monomer. FMN is required as a cofactor.

It localises to the cell membrane. The catalysed reaction is (S)-dihydroorotate + a quinone = orotate + a quinol. It functions in the pathway pyrimidine metabolism; UMP biosynthesis via de novo pathway; orotate from (S)-dihydroorotate (quinone route): step 1/1. Catalyzes the conversion of dihydroorotate to orotate with quinone as electron acceptor. This Cupriavidus pinatubonensis (strain JMP 134 / LMG 1197) (Cupriavidus necator (strain JMP 134)) protein is Dihydroorotate dehydrogenase (quinone).